The chain runs to 730 residues: Probable palmitoyltransferase AKR2 (730 aa).

ANK repeat units lie at residues 32–62 (FVVE…DINK), 66–95 (DELP…NVNQ), 100–129 (ERAT…NPTL), 133–166 (QGLN…NVDI), 172–201 (NNRT…TVAL), and 205–234 (RGFN…NFYE). 4 helical membrane-spanning segments follow: residues 283 to 303 (LMIF…SLIL), 309 to 328 (IALS…KFVL), 344 to 364 (TPFF…IWVK), and 376 to 396 (AKDA…LKLV). A DHHC domain is found at 429–479 (NFCVETLERKPLRSKYSLFSGALVARFNHYCPWVYNDIGLKNHKLFMFFAF). Cys-459 acts as the S-palmitoyl cysteine intermediate in catalysis. 2 helical membrane passes run 473-493 (LFMF…WLCL) and 530-550 (TFFL…MLIV).

This sequence belongs to the DHHC palmitoyltransferase family. AKR/ZDHHC17 subfamily.

It is found in the membrane. The catalysed reaction is L-cysteinyl-[protein] + hexadecanoyl-CoA = S-hexadecanoyl-L-cysteinyl-[protein] + CoA. The polypeptide is Probable palmitoyltransferase AKR2 (AKR2) (Saccharomyces uvarum (strain ATCC 76518 / CBS 7001 / CLIB 283 / NBRC 10550 / MCYC 623 / NCYC 2669 / NRRL Y-11845) (Yeast)).